The sequence spans 109 residues: UPF0122 protein ABC2295 (109 aa).

Belongs to the UPF0122 family.

Might take part in the signal recognition particle (SRP) pathway. This is inferred from the conservation of its genetic proximity to ftsY/ffh. May be a regulatory protein. This chain is UPF0122 protein ABC2295, found in Shouchella clausii (strain KSM-K16) (Alkalihalobacillus clausii).